Here is a 223-residue protein sequence, read N- to C-terminus: Phosphoribosylformylglycinamidine synthase subunit PurQ (223 aa).

Residues 3-223 (FAVLVFPGSN…MVKSWREQHV (221 aa)) enclose the Glutamine amidotransferase type-1 domain. The active-site Nucleophile is Cys-85. Active-site residues include His-193 and Glu-195.

In terms of assembly, part of the FGAM synthase complex composed of 1 PurL, 1 PurQ and 2 PurS subunits.

It localises to the cytoplasm. The catalysed reaction is N(2)-formyl-N(1)-(5-phospho-beta-D-ribosyl)glycinamide + L-glutamine + ATP + H2O = 2-formamido-N(1)-(5-O-phospho-beta-D-ribosyl)acetamidine + L-glutamate + ADP + phosphate + H(+). The enzyme catalyses L-glutamine + H2O = L-glutamate + NH4(+). It functions in the pathway purine metabolism; IMP biosynthesis via de novo pathway; 5-amino-1-(5-phospho-D-ribosyl)imidazole from N(2)-formyl-N(1)-(5-phospho-D-ribosyl)glycinamide: step 1/2. Part of the phosphoribosylformylglycinamidine synthase complex involved in the purines biosynthetic pathway. Catalyzes the ATP-dependent conversion of formylglycinamide ribonucleotide (FGAR) and glutamine to yield formylglycinamidine ribonucleotide (FGAM) and glutamate. The FGAM synthase complex is composed of three subunits. PurQ produces an ammonia molecule by converting glutamine to glutamate. PurL transfers the ammonia molecule to FGAR to form FGAM in an ATP-dependent manner. PurS interacts with PurQ and PurL and is thought to assist in the transfer of the ammonia molecule from PurQ to PurL. This chain is Phosphoribosylformylglycinamidine synthase subunit PurQ, found in Staphylococcus aureus (strain MSSA476).